Here is a 229-residue protein sequence, read N- to C-terminus: Probable GTP-binding protein EngB (229 aa).

An EngB-type G domain is found at 53-228 (DLPEVAFAGR…RAEIVRLCID (176 aa)). Residues 61 to 68 (GRSNVGKS), 88 to 92 (GRTRE), 106 to 109 (DLPG), 173 to 176 (TKAD), and 207 to 209 (TSS) each bind GTP. Mg(2+) is bound by residues Ser-68 and Thr-90.

Belongs to the TRAFAC class TrmE-Era-EngA-EngB-Septin-like GTPase superfamily. EngB GTPase family. It depends on Mg(2+) as a cofactor.

Functionally, necessary for normal cell division and for the maintenance of normal septation. This is Probable GTP-binding protein EngB from Caulobacter vibrioides (strain NA1000 / CB15N) (Caulobacter crescentus).